The primary structure comprises 191 residues: Molybdenum cofactor guanylyltransferase (191 aa).

GTP-binding positions include 11 to 13 (LCG), Lys-23, Asp-66, and Asp-97. Asp-97 is a binding site for Mg(2+).

It belongs to the MobA family. As to quaternary structure, monomer. Mg(2+) serves as cofactor.

It is found in the cytoplasm. It carries out the reaction Mo-molybdopterin + GTP + H(+) = Mo-molybdopterin guanine dinucleotide + diphosphate. Transfers a GMP moiety from GTP to Mo-molybdopterin (Mo-MPT) cofactor (Moco or molybdenum cofactor) to form Mo-molybdopterin guanine dinucleotide (Mo-MGD) cofactor. The sequence is that of Molybdenum cofactor guanylyltransferase from Campylobacter jejuni subsp. jejuni serotype O:6 (strain 81116 / NCTC 11828).